The sequence spans 432 residues: Adenylosuccinate synthetase (432 aa).

GTP contacts are provided by residues 12 to 18 (GDEGKGK) and 40 to 42 (GHT). The active-site Proton acceptor is Asp13. Positions 13 and 40 each coordinate Mg(2+). Residues 13 to 16 (DEGK), 38 to 41 (NAGH), Thr128, Arg142, Gln223, Thr238, and Arg302 each bind IMP. His41 acts as the Proton donor in catalysis. 298 to 304 (TTTGRPR) is a binding site for substrate. GTP is bound by residues Arg304, 330 to 332 (HLD), and 417 to 419 (GVG).

This sequence belongs to the adenylosuccinate synthetase family. As to quaternary structure, homodimer. It depends on Mg(2+) as a cofactor.

It is found in the cytoplasm. It catalyses the reaction IMP + L-aspartate + GTP = N(6)-(1,2-dicarboxyethyl)-AMP + GDP + phosphate + 2 H(+). It functions in the pathway purine metabolism; AMP biosynthesis via de novo pathway; AMP from IMP: step 1/2. In terms of biological role, plays an important role in the de novo pathway of purine nucleotide biosynthesis. Catalyzes the first committed step in the biosynthesis of AMP from IMP. This is Adenylosuccinate synthetase from Symbiobacterium thermophilum (strain DSM 24528 / JCM 14929 / IAM 14863 / T).